We begin with the raw amino-acid sequence, 196 residues long: ATP-dependent Clp protease proteolytic subunit 1 (196 aa).

Residue S96 is the Nucleophile of the active site. H121 is an active-site residue.

This sequence belongs to the peptidase S14 family. As to quaternary structure, fourteen ClpP subunits assemble into 2 heptameric rings which stack back to back to give a disk-like structure with a central cavity, resembling the structure of eukaryotic proteasomes.

The protein localises to the cytoplasm. It carries out the reaction Hydrolysis of proteins to small peptides in the presence of ATP and magnesium. alpha-casein is the usual test substrate. In the absence of ATP, only oligopeptides shorter than five residues are hydrolyzed (such as succinyl-Leu-Tyr-|-NHMec, and Leu-Tyr-Leu-|-Tyr-Trp, in which cleavage of the -Tyr-|-Leu- and -Tyr-|-Trp bonds also occurs).. Functionally, cleaves peptides in various proteins in a process that requires ATP hydrolysis. Has a chymotrypsin-like activity. Plays a major role in the degradation of misfolded proteins. This is ATP-dependent Clp protease proteolytic subunit 1 from Prochlorococcus marinus subsp. pastoris (strain CCMP1986 / NIES-2087 / MED4).